We begin with the raw amino-acid sequence, 214 residues long: Dimethylamine corrinoid protein 2 (214 aa).

Positions 1 to 91 constitute a B12-binding N-terminal domain; that stretch reads MATKEELIQE…DMPAGAATKK (91 aa). The B12-binding domain occupies 92–214; the sequence is LGVIVNGTVE…AVAKAKELLL (123 aa). His-105 lines the methylcob(III)alamin pocket.

The protein belongs to the methylamine corrinoid protein family.

The protein operates within one-carbon metabolism; methanogenesis from dimethylamine. Functionally, acts as a methyl group carrier between MtbB and MtbA. The chain is Dimethylamine corrinoid protein 2 (mtbC2) from Methanosarcina mazei (strain ATCC BAA-159 / DSM 3647 / Goe1 / Go1 / JCM 11833 / OCM 88) (Methanosarcina frisia).